Consider the following 138-residue polypeptide: Ergosterol biosynthetic protein 28 (138 aa).

The helical transmembrane segment at 17-33 (LPYWLLFISVVSIFNSV) threads the bilayer. Residue Asn40 is glycosylated (N-linked (GlcNAc...) asparagine). 3 consecutive transmembrane segments (helical) span residues 56–75 (LSAR…RFYG), 87–107 (LTQF…LYFG), and 114–131 (GLSG…WMYL).

It belongs to the ERG28 family. As to quaternary structure, heterotetramer of ERG25, ERG26, ERG27 and ERG28. ERG28 acts as a scaffold to tether ERG27 and other 4,4-demethylation-related enzymes, forming a demethylation enzyme complex, in the endoplasmic reticulum. Interacts with ERG25, ERG26 and ERG27. Also interacts with ERG1, ERG3, ERG5, ERG6 and ERG11.

It is found in the endoplasmic reticulum membrane. Functionally, part of the third module of ergosterol biosynthesis pathway that includes the late steps of the pathway. ERG28 has a role as a scaffold to help anchor the catalytic components of the C-4 demethylation complex ERG25, ERG26 and ERG27 to the endoplasmic reticulum. The third module or late pathway involves the ergosterol synthesis itself through consecutive reactions that mainly occur in the endoplasmic reticulum (ER) membrane. Firstly, the squalene synthase ERG9 catalyzes the condensation of 2 farnesyl pyrophosphate moieties to form squalene, which is the precursor of all steroids. Squalene synthase is crucial for balancing the incorporation of farnesyl diphosphate (FPP) into sterol and nonsterol isoprene synthesis. Secondly, the squalene epoxidase ERG1 catalyzes the stereospecific oxidation of squalene to (S)-2,3-epoxysqualene, which is considered to be a rate-limiting enzyme in steroid biosynthesis. Then, the lanosterol synthase ERG7 catalyzes the cyclization of (S)-2,3 oxidosqualene to lanosterol, a reaction that forms the sterol core. In the next steps, lanosterol is transformed to zymosterol through a complex process involving various demethylation, reduction and desaturation reactions. The lanosterol 14-alpha-demethylase ERG11 (also known as CYP51) catalyzes C14-demethylation of lanosterol to produce 4,4'-dimethyl cholesta-8,14,24-triene-3-beta-ol, which is critical for ergosterol biosynthesis. The C-14 reductase ERG24 reduces the C14=C15 double bond of 4,4-dimethyl-cholesta-8,14,24-trienol to produce 4,4-dimethyl-cholesta-8,24-dienol. 4,4-dimethyl-cholesta-8,24-dienol is substrate of the C-4 demethylation complex ERG25-ERG26-ERG27 in which ERG25 catalyzes the three-step monooxygenation required for the demethylation of 4,4-dimethyl and 4alpha-methylsterols, ERG26 catalyzes the oxidative decarboxylation that results in a reduction of the 3-beta-hydroxy group at the C-3 carbon to an oxo group, and ERG27 is responsible for the reduction of the keto group on the C-3. ERG28 has a role as a scaffold to help anchor ERG25, ERG26 and ERG27 to the endoplasmic reticulum and ERG29 regulates the activity of the iron-containing C4-methylsterol oxidase ERG25. Then, the sterol 24-C-methyltransferase ERG6 catalyzes the methyl transfer from S-adenosyl-methionine to the C-24 of zymosterol to form fecosterol. The C-8 sterol isomerase ERG2 catalyzes the reaction which results in unsaturation at C-7 in the B ring of sterols and thus converts fecosterol to episterol. The sterol-C5-desaturase ERG3 then catalyzes the introduction of a C-5 double bond in the B ring to produce 5-dehydroepisterol. The C-22 sterol desaturase ERG5 further converts 5-dehydroepisterol into ergosta-5,7,22,24(28)-tetraen-3beta-ol by forming the C-22(23) double bond in the sterol side chain. Finally, ergosta-5,7,22,24(28)-tetraen-3beta-ol is substrate of the C-24(28) sterol reductase ERG4 to produce ergosterol. The sequence is that of Ergosterol biosynthetic protein 28 from Candida albicans (strain SC5314 / ATCC MYA-2876) (Yeast).